The primary structure comprises 524 residues: Solute carrier family 2, facilitated glucose transporter member 2 (524 aa).

Residues 1–6 (MTEDKI) lie on the Cytoplasmic side of the membrane. A helical membrane pass occupies residues 7–26 (TGTLVFAVLTAVLGSFQFGY). Residues 27-89 (DIGVINAPQQ…SWAEEETTAS (63 aa)) are Extracellular-facing. N-linked (GlcNAc...) asparagine glycosylation occurs at Asn62. Residues 90–115 (ASLIIMLWSLSVSIFAIGGMIASFFG) form a helical membrane-spanning segment. Residues 116–126 (GMLGDRLGRIK) lie on the Cytoplasmic side of the membrane. The helical transmembrane segment at 127-145 (AMLVANILSLVGALLMWFS) threads the bilayer. Residues 146-150 (KLGPS) are Extracellular-facing. Residues 151–176 (HILIISGRGISGLYCGLISGLVPMYI) form a helical membrane-spanning segment. At 177 to 187 (GEIAPTKFRGA) the chain is on the cytoplasmic side. A helical membrane pass occupies residues 188 to 211 (IGALHQLAIVTGILVSQIIGLDFL). Gln193 contacts D-glucose. Residues 212 to 216 (LGNHE) lie on the Extracellular side of the membrane. Residues 217-239 (LWHILLGLSAVPAVLQSLMLFFC) traverse the membrane as a helical segment. The Cytoplasmic segment spans residues 240-303 (PESPRYLYIK…LFTNSSYRQP (64 aa)). A helical membrane pass occupies residues 304 to 327 (ILVALMLHMAQQFSGINGIFYYST). Residues 314–315 (QQ) and Asn320 each bind D-glucose. Over 328 to 338 (SIFQTAGISQP) the chain is Extracellular. A helical transmembrane segment spans residues 339 to 360 (VYATIGVGAINTIFTALSVFLV). A D-glucose-binding site is contributed by Asn349. Topologically, residues 361-366 (EKAGRR) are cytoplasmic. Residues 367–389 (SLFLIGMSGMFVCAIFMSVGLVL) form a helical membrane-spanning segment. At 390–394 (LDKLP) the chain is on the extracellular side. Residues 395 to 413 (WMSYVSMTAIFLFVSFFEI) traverse the membrane as a helical segment. Glu412 and Trp420 together coordinate D-glucose. At 414–433 (GPGPIPWFMVAEFFSQGPRP) the chain is on the cytoplasmic side. Residues 434–458 (AALAMAAFSNWTCNFIIALCFQYIA) traverse the membrane as a helical segment. Residues 459 to 463 (DFCGP) lie on the Extracellular side of the membrane. Residues 464 to 482 (YVFFLFAGVVLVFTLFTFF) form a helical membrane-spanning segment. Residues 483–524 (KVPETKGKSFEEIAAEFQKKSGSAQSPKAAVEMEFLGATETV) are Cytoplasmic-facing. At Thr523 the chain carries Phosphothreonine.

Belongs to the major facilitator superfamily. Sugar transporter (TC 2.A.1.1) family. Glucose transporter subfamily. Post-translationally, N-glycosylated; required for stability and retention at the cell surface of pancreatic beta cells.

The protein localises to the cell membrane. It carries out the reaction D-glucose(out) = D-glucose(in). The catalysed reaction is D-fructose(out) = D-fructose(in). It catalyses the reaction L-dehydroascorbate(out) = L-dehydroascorbate(in). The enzyme catalyses D-galactose(in) = D-galactose(out). With respect to regulation, D-glucose and maltose competitively inhibit fructose transport. D-glucose, D-fructose and maltose inhibit deoxyglucose transport. Its function is as follows. Facilitative hexose transporter that mediates the transport of glucose, fructose and galactose. Likely mediates the bidirectional transfer of glucose across the plasma membrane of hepatocytes and is responsible for uptake of glucose by the beta cells; may comprise part of the glucose-sensing mechanism of the beta cell. May also participate with the Na(+)/glucose cotransporter in the transcellular transport of glucose in the small intestine and kidney. Also able to mediate the transport of dehydroascorbate. The sequence is that of Solute carrier family 2, facilitated glucose transporter member 2 from Sus scrofa (Pig).